A 333-amino-acid polypeptide reads, in one-letter code: Protein SEEDLING LETHAL 1, chloroplastic (333 aa).

A chloroplast-targeting transit peptide spans 1 to 55 (MQQEALSFLSSSLPSLHHNFPSLSRLRFNNFPALSFKPNTSSSSSSFFKSPDIPS). Positions 38-67 (PNTSSSSSSFFKSPDIPSLSSTTTTTTTTE) are disordered.

The protein belongs to the mTERF family. Self-interacts. Associates with the plastid-encoded RNA polymerase (PEP) complex. Interacts directly with PTAC7/PAP12, PTAC12/HMR/PAP5 and PTAC14/PAP7. In terms of tissue distribution, expressed in green aerial tissues such as cotyledons, leaves, flowers and siliques, but not in roots.

Its subcellular location is the plastid. It localises to the chloroplast stroma. It is found in the chloroplast nucleoid. In terms of biological role, transcription termination factor required for chloroplast gene expression and protein synthesis in chloroplasts. Necessary for chloroplast photosynthetic complexes assembly by modulating the accumulation of photosynthetic proteins. Essential for embryogenesis. In Arabidopsis thaliana (Mouse-ear cress), this protein is Protein SEEDLING LETHAL 1, chloroplastic.